A 355-amino-acid polypeptide reads, in one-letter code: UDP-N-acetylglucosamine--N-acetylmuramyl-(pentapeptide) pyrophosphoryl-undecaprenol N-acetylglucosamine transferase (355 aa).

UDP-N-acetyl-alpha-D-glucosamine is bound by residues 13–15, asparagine 125, arginine 162, serine 190, isoleucine 244, and glutamine 289; that span reads TGG.

This sequence belongs to the glycosyltransferase 28 family. MurG subfamily.

The protein localises to the cell inner membrane. The catalysed reaction is di-trans,octa-cis-undecaprenyl diphospho-N-acetyl-alpha-D-muramoyl-L-alanyl-D-glutamyl-meso-2,6-diaminopimeloyl-D-alanyl-D-alanine + UDP-N-acetyl-alpha-D-glucosamine = di-trans,octa-cis-undecaprenyl diphospho-[N-acetyl-alpha-D-glucosaminyl-(1-&gt;4)]-N-acetyl-alpha-D-muramoyl-L-alanyl-D-glutamyl-meso-2,6-diaminopimeloyl-D-alanyl-D-alanine + UDP + H(+). The protein operates within cell wall biogenesis; peptidoglycan biosynthesis. Functionally, cell wall formation. Catalyzes the transfer of a GlcNAc subunit on undecaprenyl-pyrophosphoryl-MurNAc-pentapeptide (lipid intermediate I) to form undecaprenyl-pyrophosphoryl-MurNAc-(pentapeptide)GlcNAc (lipid intermediate II). This Neisseria gonorrhoeae (strain ATCC 700825 / FA 1090) protein is UDP-N-acetylglucosamine--N-acetylmuramyl-(pentapeptide) pyrophosphoryl-undecaprenol N-acetylglucosamine transferase.